The primary structure comprises 143 residues: Transcriptional regulator MraZ (143 aa).

2 SpoVT-AbrB domains span residues 5–47 (TYTP…PREE) and 76–119 (TDEQ…DAQA).

It belongs to the MraZ family. In terms of assembly, forms oligomers.

The protein localises to the cytoplasm. The protein resides in the nucleoid. The chain is Transcriptional regulator MraZ from Rhodococcus jostii (strain RHA1).